Consider the following 1650-residue polypeptide: Transmembrane domain-containing protein DDB_G0287209 (1650 aa).

Residues 194–225 (NNNNNNFNNNNNNNNNNNNNKNNYNNNKSNLI) adopt a coiled-coil conformation. Disordered regions lie at residues 197-216 (NNNFNNNNNNNNNNNNNKNN) and 1218-1296 (ENQF…NINN). Over residues 1224–1284 (NNNENSGSSG…SNSNENNYNG (61 aa)) the composition is skewed to low complexity. 9 consecutive transmembrane segments (helical) span residues 1314-1334 (PLLLIPFIFWILFFGLFLSLF), 1347-1369 (ILFLQLNSIVFYPLPNIYGLQLF), 1390-1410 (ISISLISIFLIYLIGISDVTS), 1454-1474 (WNIYLMLIQPLFHCLISLIVP), 1489-1509 (ILFISTPIQIVFFFSSIVILF), 1515-1535 (WWDLIFVFKTILFTSLSVTLL), 1539-1559 (PVYFSALVICQIVYSYSQFAF), 1570-1590 (VENLLNLFQLSILIVINTSII), and 1595-1615 (FNLIGILFTIVIFSCSLITII).

The protein localises to the membrane. This is Transmembrane domain-containing protein DDB_G0287209 from Dictyostelium discoideum (Social amoeba).